We begin with the raw amino-acid sequence, 92 residues long: DNA-binding protein HU-alpha (92 aa).

This sequence belongs to the bacterial histone-like protein family. In terms of assembly, heterodimer of an alpha and a beta chain.

Histone-like DNA-binding protein which is capable of wrapping DNA to stabilize it, and thus to prevent its denaturation under extreme environmental conditions. This chain is DNA-binding protein HU-alpha (hupA), found in Burkholderia pseudomallei (strain K96243).